The chain runs to 475 residues: 1-aminocyclopropane-1-carboxylate synthase CMA101 (475 aa).

Position 272 is an N6-(pyridoxal phosphate)lysine (Lys-272).

Belongs to the class-I pyridoxal-phosphate-dependent aminotransferase family. Homodimer. The cofactor is pyridoxal 5'-phosphate.

It catalyses the reaction S-adenosyl-L-methionine = 1-aminocyclopropane-1-carboxylate + S-methyl-5'-thioadenosine + H(+). It participates in alkene biosynthesis; ethylene biosynthesis via S-adenosyl-L-methionine; ethylene from S-adenosyl-L-methionine: step 1/2. Its function is as follows. Catalyzes the formation of 1-aminocyclopropane-1-carboxylate, a direct precursor of ethylene in higher plants. This chain is 1-aminocyclopropane-1-carboxylate synthase CMA101 (ACS2), found in Cucurbita maxima (Pumpkin).